A 1826-amino-acid polypeptide reads, in one-letter code: Protein TIC 214 (1826 aa).

A run of 5 helical transmembrane segments spans residues 18-38, 67-87, 127-147, 175-195, and 221-241; these read IINS…FSIG, FITG…HLAL, LSIQ…HFIL, VGWL…LVWI, and IFSI…PSPI. The disordered stretch occupies residues 250–308; sequence TEEGWESEEETDVEIETASETKGTKQEQEGSTEEDPSPSLFSEEKEDPDKIDETEEIRV. 2 stretches are compositionally biased toward acidic residues: residues 252 to 266 and 293 to 304; these read EGWE…EIET and EKEDPDKIDETE. A helical membrane pass occupies residues 774-794; the sequence is LILIIQSIFRKYILLPSLIIV. Residues 1032–1057 form a disordered region; the sequence is TKGLMKEKNSNAKKRGSPNKTSFNRK. Over residues 1042 to 1057 the composition is skewed to basic residues; it reads NAKKRGSPNKTSFNRK. The helical transmembrane segment at 1081 to 1101 threads the bilayer; the sequence is FYLFITIFIKRIYIDIFVCII.

Belongs to the TIC214 family. Part of the Tic complex.

It localises to the plastid. Its subcellular location is the chloroplast inner membrane. Involved in protein precursor import into chloroplasts. May be part of an intermediate translocation complex acting as a protein-conducting channel at the inner envelope. In Daucus carota (Wild carrot), this protein is Protein TIC 214.